The following is a 98-amino-acid chain: Ferredoxin-like protein (98 aa).

The protein to ferredoxins from P.putida and C.tartarivorum, ferredoxin I from A.vinelandii, ferredoxin II from D.desulfuricans.

In terms of biological role, could be a 3Fe-4S cluster-containing protein. The chain is Ferredoxin-like protein (fixX) from Rhizobium leguminosarum bv. trifolii.